A 168-amino-acid polypeptide reads, in one-letter code: MSNRRKSNKLKEKETDWQERVVQIRRVTKVVKGGKKLSFRAILIIGNEKGEVGVGVGKASDVIGAVKKAVSDGKKKIVSVPITKDSSIPHIVKGRSGAAKVIMRPSAPGSGVIAGGSVRTILELAGVKNILAKQLGSNNPLNNARAATDALLKLKTFSQVAQDRGITS.

An S5 DRBM domain is found at 17–80 (WQERVVQIRR…SDGKKKIVSV (64 aa)).

The protein belongs to the universal ribosomal protein uS5 family. Part of the 30S ribosomal subunit. Contacts protein S4.

The protein resides in the plastid. It localises to the chloroplast. With S4 and S12 plays an important role in translational accuracy. The sequence is that of Small ribosomal subunit protein uS5c (rps5) from Rhodomonas salina (Cryptomonas salina).